The chain runs to 402 residues: Phosphoglycerate kinase (402 aa).

Residues 21–23, arginine 36, 59–62, arginine 119, and arginine 154 contribute to the substrate site; these read DFN and HLGR. ATP is bound by residues lysine 207, glycine 298, glutamate 329, and 356 to 359; that span reads GGDA.

This sequence belongs to the phosphoglycerate kinase family. As to quaternary structure, monomer.

It localises to the cytoplasm. The enzyme catalyses (2R)-3-phosphoglycerate + ATP = (2R)-3-phospho-glyceroyl phosphate + ADP. Its pathway is carbohydrate degradation; glycolysis; pyruvate from D-glyceraldehyde 3-phosphate: step 2/5. The chain is Phosphoglycerate kinase (pgk) from Chlamydia pneumoniae (Chlamydophila pneumoniae).